A 426-amino-acid polypeptide reads, in one-letter code: Histidine--tRNA ligase (426 aa).

The protein belongs to the class-II aminoacyl-tRNA synthetase family.

The protein resides in the cytoplasm. The catalysed reaction is tRNA(His) + L-histidine + ATP = L-histidyl-tRNA(His) + AMP + diphosphate + H(+). In Thermoplasma volcanium (strain ATCC 51530 / DSM 4299 / JCM 9571 / NBRC 15438 / GSS1), this protein is Histidine--tRNA ligase (hisS).